We begin with the raw amino-acid sequence, 464 residues long: Fumarate hydratase class II (464 aa).

Substrate contacts are provided by residues 98-100 (SGT), 129-132 (HPND), 139-141 (SSN), and T187. H188 serves as the catalytic Proton donor/acceptor. S318 is an active-site residue. Residues S319 and 324–326 (KVN) each bind substrate.

Belongs to the class-II fumarase/aspartase family. Fumarase subfamily. Homotetramer.

It is found in the cytoplasm. It catalyses the reaction (S)-malate = fumarate + H2O. Its pathway is carbohydrate metabolism; tricarboxylic acid cycle; (S)-malate from fumarate: step 1/1. Functionally, involved in the TCA cycle. Catalyzes the stereospecific interconversion of fumarate to L-malate. The protein is Fumarate hydratase class II of Haemophilus influenzae (strain ATCC 51907 / DSM 11121 / KW20 / Rd).